A 156-amino-acid chain; its full sequence is ATP synthase subunit b', chloroplastic (156 aa).

A helical transmembrane segment spans residues 24–44; the sequence is ATLPLVAIQFILLMVLLNILL.

The protein belongs to the ATPase B chain family. As to quaternary structure, F-type ATPases have 2 components, F(1) - the catalytic core - and F(0) - the membrane proton channel. F(1) has five subunits: alpha(3), beta(3), gamma(1), delta(1), epsilon(1). F(0) has four main subunits: a(1), b(1), b'(1) and c(10-14). The alpha and beta chains form an alternating ring which encloses part of the gamma chain. F(1) is attached to F(0) by a central stalk formed by the gamma and epsilon chains, while a peripheral stalk is formed by the delta, b and b' chains.

Its subcellular location is the plastid. It is found in the chloroplast thylakoid membrane. Its function is as follows. F(1)F(0) ATP synthase produces ATP from ADP in the presence of a proton or sodium gradient. F-type ATPases consist of two structural domains, F(1) containing the extramembraneous catalytic core and F(0) containing the membrane proton channel, linked together by a central stalk and a peripheral stalk. During catalysis, ATP synthesis in the catalytic domain of F(1) is coupled via a rotary mechanism of the central stalk subunits to proton translocation. Component of the F(0) channel, it forms part of the peripheral stalk, linking F(1) to F(0). The b'-subunit is a diverged and duplicated form of b found in plants and photosynthetic bacteria. This Phaeodactylum tricornutum (strain CCAP 1055/1) protein is ATP synthase subunit b', chloroplastic.